The chain runs to 472 residues: Pyruvate kinase (472 aa).

R33 is a binding site for substrate. K(+) is bound by residues N35, S37, and D67. 35-38 lines the ATP pocket; sequence NFSH. 2 residues coordinate ATP: R74 and K155. E220 serves as a coordination point for Mg(2+). Substrate contacts are provided by G243, D244, and T276. A Mg(2+)-binding site is contributed by D244.

This sequence belongs to the pyruvate kinase family. Homotetramer. Mg(2+) serves as cofactor. The cofactor is K(+).

It catalyses the reaction pyruvate + ATP = phosphoenolpyruvate + ADP + H(+). Its pathway is carbohydrate degradation; glycolysis; pyruvate from D-glyceraldehyde 3-phosphate: step 5/5. The protein is Pyruvate kinase (pyk) of Mycobacterium intracellulare.